Consider the following 753-residue polypeptide: 5-methyltetrahydropteroyltriglutamate--homocysteine methyltransferase (753 aa).

5-methyltetrahydropteroyltri-L-glutamate-binding positions include arginine 17 to lysine 20 and lysine 117. Residues isoleucine 431–serine 433 and glutamate 484 contribute to the L-homocysteine site. L-methionine-binding positions include isoleucine 431–serine 433 and glutamate 484. 5-methyltetrahydropteroyltri-L-glutamate is bound by residues arginine 515–cysteine 516 and tryptophan 561. Aspartate 599 is a binding site for L-homocysteine. Aspartate 599 contributes to the L-methionine binding site. Residue glutamate 605 participates in 5-methyltetrahydropteroyltri-L-glutamate binding. Residues histidine 641, cysteine 643, and glutamate 665 each coordinate Zn(2+). Histidine 694 serves as the catalytic Proton donor. Residue cysteine 726 coordinates Zn(2+).

It belongs to the vitamin-B12 independent methionine synthase family. Zn(2+) is required as a cofactor.

The enzyme catalyses 5-methyltetrahydropteroyltri-L-glutamate + L-homocysteine = tetrahydropteroyltri-L-glutamate + L-methionine. It functions in the pathway amino-acid biosynthesis; L-methionine biosynthesis via de novo pathway; L-methionine from L-homocysteine (MetE route): step 1/1. Catalyzes the transfer of a methyl group from 5-methyltetrahydrofolate to homocysteine resulting in methionine formation. This chain is 5-methyltetrahydropteroyltriglutamate--homocysteine methyltransferase, found in Shigella dysenteriae serotype 1 (strain Sd197).